Consider the following 477-residue polypeptide: Ectonucleotide pyrophosphatase/phosphodiesterase family member 5 (477 aa).

The N-terminal stretch at 1–24 (MTSKFLLVSFILAALSLSTTFSLQ) is a signal peptide. Positions 36 and 72 each coordinate Zn(2+). T72 functions as the Nucleophile in the catalytic mechanism. N-linked (GlcNAc...) asparagine glycosylation is found at N101 and N158. 4 residues coordinate Zn(2+): D191, H195, D238, and H239. N292 and N329 each carry an N-linked (GlcNAc...) asparagine glycan. Residue H339 coordinates Zn(2+). N362, N369, N382, and N389 each carry an N-linked (GlcNAc...) asparagine glycan. A helical transmembrane segment spans residues 432-452 (PYFIGVSLGSIIVIVFFVIFI).

The protein belongs to the nucleotide pyrophosphatase/phosphodiesterase family. Zn(2+) serves as cofactor. N-glycosylated.

The protein resides in the secreted. It localises to the membrane. Functionally, can hydrolyze NAD but cannot hydrolyze nucleotide di- and triphosphates. Lacks lysopholipase D activity. May play a role in neuronal cell communication. In Homo sapiens (Human), this protein is Ectonucleotide pyrophosphatase/phosphodiesterase family member 5.